The sequence spans 439 residues: CBL-interacting protein kinase 14 (439 aa).

The Protein kinase domain maps to 12–267; it reads YELGRLLGKG…IQKIKESTWF (256 aa). ATP is bound by residues 18-26 and Lys-41; that span reads LGKGTFGKV. Asp-135 (proton acceptor) is an active-site residue. Residues 153-182 are activation loop; the sequence is DFGLSALSESKRQDGLLHTTCGTPAYVAPE. One can recognise an NAF domain in the interval 298–333; sequence RKKNAHEDVKPMSVTNLNAFEIISFSKGFDLSGMFI. Residues 338-367 form a PPI region; the sequence is RNEARFTSDKSASTIISKLEDVAKALNLRV.

Belongs to the protein kinase superfamily. CAMK Ser/Thr protein kinase family. SNF1 subfamily. Mn(2+) is required as a cofactor.

The catalysed reaction is L-seryl-[protein] + ATP = O-phospho-L-seryl-[protein] + ADP + H(+). It carries out the reaction L-threonyl-[protein] + ATP = O-phospho-L-threonyl-[protein] + ADP + H(+). In terms of biological role, CIPK serine-threonine protein kinases interact with CBL proteins. Binding of a CBL protein to the regulatory NAF domain of CIPK protein lead to the activation of the kinase in a calcium-dependent manner. The sequence is that of CBL-interacting protein kinase 14 (CIPK14) from Oryza sativa subsp. japonica (Rice).